Here is a 421-residue protein sequence, read N- to C-terminus: Signal recognition particle receptor FtsY (421 aa).

The segment covering Met-1–Lys-10 has biased composition (basic residues). Positions Met-1–Gln-22 are disordered. GTP contacts are provided by residues Gly-228 to Thr-235, Asp-309 to Arg-313, and Thr-373 to Asp-376.

Belongs to the GTP-binding SRP family. FtsY subfamily. As to quaternary structure, part of the signal recognition particle protein translocation system, which is composed of SRP and FtsY. SRP is a ribonucleoprotein composed of Ffh and a 4.5S RNA molecule.

Its subcellular location is the cell membrane. The protein resides in the cytoplasm. The enzyme catalyses GTP + H2O = GDP + phosphate + H(+). Its function is as follows. Involved in targeting and insertion of nascent membrane proteins into the cytoplasmic membrane. Acts as a receptor for the complex formed by the signal recognition particle (SRP) and the ribosome-nascent chain (RNC). Interaction with SRP-RNC leads to the transfer of the RNC complex to the Sec translocase for insertion into the membrane, the hydrolysis of GTP by both Ffh and FtsY, and the dissociation of the SRP-FtsY complex into the individual components. This chain is Signal recognition particle receptor FtsY, found in Neisseria meningitidis serogroup C.